We begin with the raw amino-acid sequence, 442 residues long: D-serine dehydratase (442 aa).

An N6-(pyridoxal phosphate)lysine modification is found at K118.

It belongs to the serine/threonine dehydratase family. DsdA subfamily. As to quaternary structure, monomer. It depends on pyridoxal 5'-phosphate as a cofactor.

The enzyme catalyses D-serine = pyruvate + NH4(+). This Escherichia coli O139:H28 (strain E24377A / ETEC) protein is D-serine dehydratase.